A 1547-amino-acid polypeptide reads, in one-letter code: MTSRPALGTHGSGAPSRNQVRRPSKPANALPPDCIDPTLEDERPAAHNGASEARPPPRGRPHIFYSTLASSAFDLPIHSFPYQPTVNLPVPPRPGSLHLRDASQQRQILPGGTGVKDAPKLGVPETVPIPVHFPGEKAADVFPWTGTNAEDTLSEALVKAGVSNKPQIMNETNTARPSLWSNLKNKSGITTLSTLFVAVLEKRQQNGRLQTPNTFKPPPRLTLRDSTREGWLHDLANPTVSLRRLSRTIPHGLTGKVLLDQCLNKNIPLPRALWLAKCVGINELRAHKRKGQAGTVTWGRGWTSSVEQFLDSVISTIGQGDWKLRITYALQLATHLYKEHLLDDDHFLGWIPFGLDMCSSERLFIWLLVVAVPHYWNDISSCRQRGKRLAESLLNHLAKLSPIEDLAAPSTALQFLENSLLKLVTTRPACLLLPISWPKHSAALKALVTKRNLPQTAQAVEKLDGRNTRLLSFVRNGKSSSRTGAARVFHKLDSINYAAPIRIEDLSYECMEITSNAVQLISTLLHWACSCYRAGSHRIYLATRLLRRWSHLGADVYEGIIVYLQSMSWVKSGEIHVLLRIVAELVRSKHFSVGRYLQWLIATGSLGCDASLSLPSSWPVRLITEVPLTGLSDQVRTLRSTLLRGTAHSTELEEQALVNVKQSISQAVPAIFGLSLTIPSRIELNFAKLSGTIRLEIGIWLRQQVAQHAEVNEQSYLEQCEDLAILADVIGITASSLDMAVLASVADTLLYHMKTFRAIGAFDPLLGRLAMRYAAIRTVKFPERELLLSFQNLARTAQPDGQLLQLLAYDLSRLDQKNAVAACSPASDNMGEVMQHAGTCSDDEIERILSSGTSMDQNMMSRVLRKLVRNLEEHVDKGYRQFENHPAWFWRLRNFDEATFDVVLREWLETSIMACQLHILQIAIPPLVASSCMELSSFLDILRSCLANAKATQVLEPATIAIDLLRLLLPSGLSAMSCSSQDAYRYRTEQYKLCFTSDTRIIHCIGEVADLVLSTPSNSMLQTVSSLLSSETVLSIVKEHVVSDPDCLSKMKTGQSGQASFNTCFKTLLNGLLDPSGQWCLADISPEEQIIAVFKAASELSLPLCQAMIEHIFASSSALDTHAVDRLSVTVLNAVRTSMEKDQSQGLELLTNLEGPLADKIRSHAEREVLDASYFLLRGSTDGIASDCIVTAKMMQKYLTVIELTMGETPQADEQFAMLAALTDRFKGIFHALSECGGLGTPTNQATASPVVQVLAALLSLVASHGPQLLRNATQSHQAALMVALQDIVTHASLELFPSIIEHVFDVLIVLSDHISEDVRNQIARLESAKSTNSDRAYFIHSQKAPIDGWLMLTKPVIPPLEPPQPPNPNTTQNQSSPYQSPQMTSNTAAPQHRYFNQQQQQSQTLQPSQQTQHMRTYPQYAQHAAQPNRHLPAQLQRTPSHHASLSPLQQMQHMQQLQGLAQQRASQPSPIHSQRPTSVASPGGMGGLAGGNAAPSKAHTSYVNQQRDTQQYPFVQPRWEILAESSGNPTLNETAISLSLFGARRV.

Disordered regions lie at residues 1-63 (MTSR…RPHI) and 1356-1509 (PVIP…QQRD). Pro residues predominate over residues 1357 to 1369 (VIPPLEPPQPPNP). Residues 1379-1390 (YQSPQMTSNTAA) are compositionally biased toward polar residues. Low complexity-rich tracts occupy residues 1398 to 1413 (QQQQ…QQTQ) and 1446 to 1468 (LSPL…RASQ). Composition is skewed to polar residues over residues 1469-1480 (PSPIHSQRPTSV) and 1499-1509 (AHTSYVNQQRD).

Belongs to the Mediator complex subunit 12 family. As to quaternary structure, component of the SRB8-11 complex, which itself associates with the Mediator complex.

The protein resides in the nucleus. Its function is as follows. Component of the SRB8-11 complex. The SRB8-11 complex is a regulatory module of the Mediator complex which is itself involved in regulation of basal and activated RNA polymerase II-dependent transcription. The SRB8-11 complex may be involved in the transcriptional repression of a subset of genes regulated by Mediator. It may inhibit the association of the Mediator complex with RNA polymerase II to form the holoenzyme complex. In Phaeosphaeria nodorum (strain SN15 / ATCC MYA-4574 / FGSC 10173) (Glume blotch fungus), this protein is Mediator of RNA polymerase II transcription subunit 12 (SRB8).